A 152-amino-acid polypeptide reads, in one-letter code: Transcriptional regulator MraZ (152 aa).

SpoVT-AbrB domains are found at residues 5-52 (ATLV…PLPE) and 81-124 (ASEC…DETT).

It belongs to the MraZ family. As to quaternary structure, forms oligomers.

It is found in the cytoplasm. It localises to the nucleoid. Functionally, negatively regulates its own expression and that of the subsequent genes in the proximal part of the division and cell wall (dcw) gene cluster. Acts by binding directly to DNA. May also regulate the expression of genes outside the dcw cluster. The protein is Transcriptional regulator MraZ of Shigella dysenteriae serotype 1 (strain Sd197).